We begin with the raw amino-acid sequence, 421 residues long: Enolase (421 aa).

Glutamine 165 is a binding site for (2R)-2-phosphoglycerate. The Proton donor role is filled by glutamate 207. Mg(2+)-binding residues include aspartate 244, glutamate 285, and aspartate 312. (2R)-2-phosphoglycerate-binding residues include lysine 337, arginine 366, serine 367, and lysine 388. The Proton acceptor role is filled by lysine 337.

The protein belongs to the enolase family. Mg(2+) is required as a cofactor.

The protein resides in the cytoplasm. Its subcellular location is the secreted. It localises to the cell surface. It carries out the reaction (2R)-2-phosphoglycerate = phosphoenolpyruvate + H2O. It participates in carbohydrate degradation; glycolysis; pyruvate from D-glyceraldehyde 3-phosphate: step 4/5. Functionally, catalyzes the reversible conversion of 2-phosphoglycerate (2-PG) into phosphoenolpyruvate (PEP). It is essential for the degradation of carbohydrates via glycolysis. In Ehrlichia canis (strain Jake), this protein is Enolase.